A 233-amino-acid polypeptide reads, in one-letter code: Glucosamine-6-phosphate deaminase (233 aa).

The active-site Proton acceptor; for enolization step is the aspartate 62. Asparagine 128 functions as the For ring-opening step in the catalytic mechanism. Histidine 130 acts as the Proton acceptor; for ring-opening step in catalysis. Glutamate 135 functions as the For ring-opening step in the catalytic mechanism.

The protein belongs to the glucosamine/galactosamine-6-phosphate isomerase family. NagB subfamily.

The enzyme catalyses alpha-D-glucosamine 6-phosphate + H2O = beta-D-fructose 6-phosphate + NH4(+). It functions in the pathway amino-sugar metabolism; N-acetylneuraminate degradation; D-fructose 6-phosphate from N-acetylneuraminate: step 5/5. In terms of biological role, catalyzes the reversible isomerization-deamination of glucosamine 6-phosphate (GlcN6P) to form fructose 6-phosphate (Fru6P) and ammonium ion. This chain is Glucosamine-6-phosphate deaminase, found in Leuconostoc citreum (strain KM20).